We begin with the raw amino-acid sequence, 362 residues long: MHNLLENLRRRLLAQRTPEPLPPTSQGLARPSHDVVRGPCDADIPPDARNTMMPEGITVEEALAVAELPQKHALDILATAQAIRSVHKGGPAALCGIVNAKSGRCPEDCAFCAQSSHHATGSPVHALLDAETLLRRAEELRQSGAERYGIVTSGTRLTVRELATLCEAAVRIRRETGIALCGSLGQLTPDAAACLKEAGFSSYHHNLETSRSFFPAICSTHAYDDDIATVRAARAAGLRTCSGGIFGMGETDAQRIELSATLRELDVDSIPVNLLSPIPGTPLQHRPTMPPMRALVSIAIYRLMHPARDILVCGGREATLGPWQSWIFLAGANGMMVGNYLTTTGRDMADDLAMLATLGVRA.

The tract at residues 14–39 is disordered; it reads AQRTPEPLPPTSQGLARPSHDVVRGP. In terms of domain architecture, Radical SAM core spans 87-316; sequence HKGGPAALCG…ARDILVCGGR (230 aa). Residues Cys-105, Cys-109, and Cys-112 each contribute to the [4Fe-4S] cluster site. [2Fe-2S] cluster contacts are provided by Cys-181 and Cys-241.

This sequence belongs to the radical SAM superfamily. Biotin synthase family. In terms of assembly, homodimer. It depends on [4Fe-4S] cluster as a cofactor. [2Fe-2S] cluster serves as cofactor.

The catalysed reaction is (4R,5S)-dethiobiotin + (sulfur carrier)-SH + 2 reduced [2Fe-2S]-[ferredoxin] + 2 S-adenosyl-L-methionine = (sulfur carrier)-H + biotin + 2 5'-deoxyadenosine + 2 L-methionine + 2 oxidized [2Fe-2S]-[ferredoxin]. It participates in cofactor biosynthesis; biotin biosynthesis; biotin from 7,8-diaminononanoate: step 2/2. Functionally, catalyzes the conversion of dethiobiotin (DTB) to biotin by the insertion of a sulfur atom into dethiobiotin via a radical-based mechanism. The sequence is that of Biotin synthase from Nitratidesulfovibrio vulgaris (strain ATCC 29579 / DSM 644 / CCUG 34227 / NCIMB 8303 / VKM B-1760 / Hildenborough) (Desulfovibrio vulgaris).